Here is a 445-residue protein sequence, read N- to C-terminus: Serine--tRNA ligase (445 aa).

Position 229–231 (229–231 (TAE)) interacts with L-serine. ATP-binding positions include 260 to 262 (RKE) and V276. L-serine is bound at residue E283. Residue 347–350 (EVSS) coordinates ATP. L-serine is bound at residue S383.

Belongs to the class-II aminoacyl-tRNA synthetase family. Type-1 seryl-tRNA synthetase subfamily. As to quaternary structure, homodimer. The tRNA molecule binds across the dimer.

The protein localises to the cytoplasm. The enzyme catalyses tRNA(Ser) + L-serine + ATP = L-seryl-tRNA(Ser) + AMP + diphosphate + H(+). The catalysed reaction is tRNA(Sec) + L-serine + ATP = L-seryl-tRNA(Sec) + AMP + diphosphate + H(+). It participates in aminoacyl-tRNA biosynthesis; selenocysteinyl-tRNA(Sec) biosynthesis; L-seryl-tRNA(Sec) from L-serine and tRNA(Sec): step 1/1. Functionally, catalyzes the attachment of serine to tRNA(Ser). Is also able to aminoacylate tRNA(Sec) with serine, to form the misacylated tRNA L-seryl-tRNA(Sec), which will be further converted into selenocysteinyl-tRNA(Sec). The sequence is that of Serine--tRNA ligase from Thermomicrobium roseum (strain ATCC 27502 / DSM 5159 / P-2).